The sequence spans 367 residues: Protein-glutamate methylesterase/protein-glutamine glutaminase (367 aa).

In terms of domain architecture, Response regulatory spans 6–123 (RVLVVDDSAF…SLGIKQLADE (118 aa)). A 4-aspartylphosphate modification is found at Asp-57. Positions 165–361 (ISKKEIVVVI…DILLKKVNEY (197 aa)) constitute a CheB-type methylesterase domain. Active-site residues include Ser-177, His-204, and Asp-303.

Belongs to the CheB family. Post-translationally, phosphorylated by CheA. Phosphorylation of the N-terminal regulatory domain activates the methylesterase activity.

It is found in the cytoplasm. The catalysed reaction is [protein]-L-glutamate 5-O-methyl ester + H2O = L-glutamyl-[protein] + methanol + H(+). It carries out the reaction L-glutaminyl-[protein] + H2O = L-glutamyl-[protein] + NH4(+). In terms of biological role, involved in chemotaxis. Part of a chemotaxis signal transduction system that modulates chemotaxis in response to various stimuli. Catalyzes the demethylation of specific methylglutamate residues introduced into the chemoreceptors (methyl-accepting chemotaxis proteins or MCP) by CheR. Also mediates the irreversible deamidation of specific glutamine residues to glutamic acid. In Caldanaerobacter subterraneus subsp. tengcongensis (strain DSM 15242 / JCM 11007 / NBRC 100824 / MB4) (Thermoanaerobacter tengcongensis), this protein is Protein-glutamate methylesterase/protein-glutamine glutaminase.